We begin with the raw amino-acid sequence, 227 residues long: NAD(P)H-quinone oxidoreductase subunit K, chloroplastic (227 aa).

[4Fe-4S] cluster is bound by residues Cys-43, Cys-44, Cys-108, and Cys-139.

Belongs to the complex I 20 kDa subunit family. As to quaternary structure, NDH is composed of at least 16 different subunits, 5 of which are encoded in the nucleus. The cofactor is [4Fe-4S] cluster.

Its subcellular location is the plastid. It localises to the chloroplast thylakoid membrane. It catalyses the reaction a plastoquinone + NADH + (n+1) H(+)(in) = a plastoquinol + NAD(+) + n H(+)(out). The enzyme catalyses a plastoquinone + NADPH + (n+1) H(+)(in) = a plastoquinol + NADP(+) + n H(+)(out). In terms of biological role, NDH shuttles electrons from NAD(P)H:plastoquinone, via FMN and iron-sulfur (Fe-S) centers, to quinones in the photosynthetic chain and possibly in a chloroplast respiratory chain. It has NADH- and deamino-NADH-specific dehydrogenase activity, using ferricyanide or quinones as acceptors. The immediate electron acceptor for the enzyme in this species is believed to be plastoquinone. Couples the redox reaction to proton translocation, and thus conserves the redox energy in a proton gradient. The sequence is that of NAD(P)H-quinone oxidoreductase subunit K, chloroplastic from Pisum sativum (Garden pea).